Reading from the N-terminus, the 213-residue chain is MSRNSFIPHVPDIQAAGGLVPMVVEQSARGERAYDIYSRLLKERIIFLVGQVEDYMANLVVAQLLFLEAENPEKDIHLYINSPGGSVTAGMSIYDTMQFIKPNVSTTCIGQACSMGALLLAGGAAGKRYCLPHSRMMIHQPLGGFQGQASDIEIHAKEILFIKERLNQILAHHTGQPLDVIARDTDRDRFMSGDEAVKYGLIDKVMTQRDLAV.

Catalysis depends on Ser114, which acts as the Nucleophile. His139 is an active-site residue.

The protein belongs to the peptidase S14 family. Fourteen ClpP subunits assemble into 2 heptameric rings which stack back to back to give a disk-like structure with a central cavity, resembling the structure of eukaryotic proteasomes.

Its subcellular location is the cytoplasm. The enzyme catalyses Hydrolysis of proteins to small peptides in the presence of ATP and magnesium. alpha-casein is the usual test substrate. In the absence of ATP, only oligopeptides shorter than five residues are hydrolyzed (such as succinyl-Leu-Tyr-|-NHMec, and Leu-Tyr-Leu-|-Tyr-Trp, in which cleavage of the -Tyr-|-Leu- and -Tyr-|-Trp bonds also occurs).. Its function is as follows. Cleaves peptides in various proteins in a process that requires ATP hydrolysis. Has a chymotrypsin-like activity. Plays a major role in the degradation of misfolded proteins. This is ATP-dependent Clp protease proteolytic subunit 1 from Pseudomonas aeruginosa (strain ATCC 15692 / DSM 22644 / CIP 104116 / JCM 14847 / LMG 12228 / 1C / PRS 101 / PAO1).